We begin with the raw amino-acid sequence, 169 residues long: S-ribosylhomocysteine lyase (169 aa).

Positions 54, 58, and 128 each coordinate Fe cation.

This sequence belongs to the LuxS family. As to quaternary structure, homodimer. Requires Fe cation as cofactor.

The enzyme catalyses S-(5-deoxy-D-ribos-5-yl)-L-homocysteine = (S)-4,5-dihydroxypentane-2,3-dione + L-homocysteine. Functionally, involved in the synthesis of autoinducer 2 (AI-2) which is secreted by bacteria and is used to communicate both the cell density and the metabolic potential of the environment. The regulation of gene expression in response to changes in cell density is called quorum sensing. Catalyzes the transformation of S-ribosylhomocysteine (RHC) to homocysteine (HC) and 4,5-dihydroxy-2,3-pentadione (DPD). The sequence is that of S-ribosylhomocysteine lyase from Shewanella putrefaciens (strain CN-32 / ATCC BAA-453).